Here is a 204-residue protein sequence, read N- to C-terminus: Putative peptidase PfaP (204 aa).

The N-terminal stretch at 1 to 27 (MRLRKTRKIVVSMKDMAASGGYYIASS) is a signal peptide. S19 serves as the catalytic Nucleophile. K70 acts as the Proton donor/acceptor in catalysis.

Belongs to the peptidase S49 family.

Possible protease. May be involved in export of periplasmic flagella proteins. The chain is Putative peptidase PfaP (pfaP) from Leptospira borgpetersenii.